A 600-amino-acid chain; its full sequence is Prostaglandin G/H synthase 1 (600 aa).

Residues 1 to 24 (MSRQGISLRFPLLLLLLSPSPVLP) form the signal peptide. In terms of domain architecture, EGF-like spans 32–70 (PVNPCCYYPCQHQGICVRFGLDRYQCDCTRTGYYGPNCT). Disulfide bonds link Cys-36–Cys-47, Cys-37–Cys-159, Cys-41–Cys-57, and Cys-59–Cys-69. Asn-68, Asn-104, and Asn-144 each carry an N-linked (GlcNAc...) asparagine glycan. Residue His-207 is the Proton acceptor of the active site. The For cyclooxygenase activity role is filled by Tyr-385. His-388 provides a ligand contact to heme b. An N-linked (GlcNAc...) asparagine glycan is attached at Asn-410. Cysteines 569 and 575 form a disulfide.

Belongs to the prostaglandin G/H synthase family. In terms of assembly, homodimer. Heme b is required as a cofactor.

It localises to the microsome membrane. Its subcellular location is the endoplasmic reticulum membrane. The enzyme catalyses (5Z,8Z,11Z,14Z)-eicosatetraenoate + AH2 + 2 O2 = prostaglandin H2 + A + H2O. The catalysed reaction is (5Z,8Z,11Z,14Z)-eicosatetraenoate + 2 O2 = prostaglandin G2. It carries out the reaction prostaglandin G2 + AH2 = prostaglandin H2 + A + H2O. It catalyses the reaction (9Z,12Z)-octadecadienoate + AH2 + O2 = (9R)-hydroxy-(10E,12Z)-octadecadienoate + A + H2O. The enzyme catalyses (9Z,12Z)-octadecadienoate + AH2 + O2 = (9S)-hydroxy-(10E,12Z)-octadecadienoate + A + H2O. The catalysed reaction is (9Z,12Z)-octadecadienoate + AH2 + O2 = (13S)-hydroxy-(9Z,11E)-octadecadienoate + A + H2O. It carries out the reaction (9Z,12Z)-octadecadienoate + AH2 + O2 = (13R)-hydroxy-(9Z,11E)-octadecadienoate + A + H2O. Its pathway is lipid metabolism; prostaglandin biosynthesis. With respect to regulation, the cyclooxygenase activity is inhibited by nonsteroidal anti-inflammatory drugs (NSAIDs) including ibuprofen, flurbiprofen, ketoprofen, naproxen, flurbiprofen, anirolac, fenclofenac and diclofenac. In terms of biological role, dual cyclooxygenase and peroxidase that plays an important role in the biosynthesis pathway of prostanoids, a class of C20 oxylipins mainly derived from arachidonate ((5Z,8Z,11Z,14Z)-eicosatetraenoate, AA, C20:4(n-6)), with a particular role in the inflammatory response. The cyclooxygenase activity oxygenates AA to the hydroperoxy endoperoxide prostaglandin G2 (PGG2), and the peroxidase activity reduces PGG2 to the hydroxy endoperoxide prostaglandin H2 (PGH2), the precursor of all 2-series prostaglandins and thromboxanes. This complex transformation is initiated by abstraction of hydrogen at carbon 13 (with S-stereochemistry), followed by insertion of molecular O2 to form the endoperoxide bridge between carbon 9 and 11 that defines prostaglandins. The insertion of a second molecule of O2 (bis-oxygenase activity) yields a hydroperoxy group in PGG2 that is then reduced to PGH2 by two electrons. Involved in the constitutive production of prostanoids in particular in the stomach and platelets. In gastric epithelial cells, it is a key step in the generation of prostaglandins, such as prostaglandin E2 (PGE2), which plays an important role in cytoprotection. In platelets, it is involved in the generation of thromboxane A2 (TXA2), which promotes platelet activation and aggregation, vasoconstriction and proliferation of vascular smooth muscle cells. Can also use linoleate (LA, (9Z,12Z)-octadecadienoate, C18:2(n-6)) as substrate and produce hydroxyoctadecadienoates (HODEs) in a regio- and stereospecific manner, being (9R)-HODE ((9R)-hydroxy-(10E,12Z)-octadecadienoate) and (13S)-HODE ((13S)-hydroxy-(9Z,11E)-octadecadienoate) its major products. The protein is Prostaglandin G/H synthase 1 (PTGS1) of Bos taurus (Bovine).